The sequence spans 240 residues: UDP-2,3-diacylglucosamine hydrolase (240 aa).

The Mn(2+) site is built by D7, H9, D40, N78, and H113. 78–79 (NR) is a binding site for substrate. D121, S159, T163, K166, and H194 together coordinate substrate. Positions 194 and 196 each coordinate Mn(2+).

This sequence belongs to the LpxH family. The cofactor is Mn(2+).

The protein localises to the cell inner membrane. The catalysed reaction is UDP-2-N,3-O-bis[(3R)-3-hydroxytetradecanoyl]-alpha-D-glucosamine + H2O = 2-N,3-O-bis[(3R)-3-hydroxytetradecanoyl]-alpha-D-glucosaminyl 1-phosphate + UMP + 2 H(+). It participates in glycolipid biosynthesis; lipid IV(A) biosynthesis; lipid IV(A) from (3R)-3-hydroxytetradecanoyl-[acyl-carrier-protein] and UDP-N-acetyl-alpha-D-glucosamine: step 4/6. In terms of biological role, hydrolyzes the pyrophosphate bond of UDP-2,3-diacylglucosamine to yield 2,3-diacylglucosamine 1-phosphate (lipid X) and UMP by catalyzing the attack of water at the alpha-P atom. Involved in the biosynthesis of lipid A, a phosphorylated glycolipid that anchors the lipopolysaccharide to the outer membrane of the cell. This Pseudomonas putida (strain W619) protein is UDP-2,3-diacylglucosamine hydrolase.